Consider the following 383-residue polypeptide: Bifunctional enzyme IspD/IspF (383 aa).

A 2-C-methyl-D-erythritol 4-phosphate cytidylyltransferase region spans residues 1–226; sequence MKIAAVIVAA…ERQIMSETIT (226 aa). The tract at residues 227-383 is 2-C-methyl-D-erythritol 2,4-cyclodiphosphate synthase; that stretch reads VTGQGYDVHR…QAIVTARLTT (157 aa). A divalent metal cation-binding residues include Asp-233 and His-235. 4-CDP-2-C-methyl-D-erythritol 2-phosphate contacts are provided by residues 233–235 and 259–260; these read DVH and HS. An a divalent metal cation-binding site is contributed by His-267. Residues 281-283, 357-360, Phe-364, and Arg-367 each bind 4-CDP-2-C-methyl-D-erythritol 2-phosphate; these read DIG and TTTE.

It in the N-terminal section; belongs to the IspD/TarI cytidylyltransferase family. IspD subfamily. In the C-terminal section; belongs to the IspF family. It depends on a divalent metal cation as a cofactor.

It carries out the reaction 2-C-methyl-D-erythritol 4-phosphate + CTP + H(+) = 4-CDP-2-C-methyl-D-erythritol + diphosphate. The catalysed reaction is 4-CDP-2-C-methyl-D-erythritol 2-phosphate = 2-C-methyl-D-erythritol 2,4-cyclic diphosphate + CMP. The protein operates within isoprenoid biosynthesis; isopentenyl diphosphate biosynthesis via DXP pathway; isopentenyl diphosphate from 1-deoxy-D-xylulose 5-phosphate: step 2/6. It functions in the pathway isoprenoid biosynthesis; isopentenyl diphosphate biosynthesis via DXP pathway; isopentenyl diphosphate from 1-deoxy-D-xylulose 5-phosphate: step 4/6. Functionally, bifunctional enzyme that catalyzes the formation of 4-diphosphocytidyl-2-C-methyl-D-erythritol from CTP and 2-C-methyl-D-erythritol 4-phosphate (MEP) (IspD), and catalyzes the conversion of 4-diphosphocytidyl-2-C-methyl-D-erythritol 2-phosphate (CDP-ME2P) to 2-C-methyl-D-erythritol 2,4-cyclodiphosphate (ME-CPP) with a corresponding release of cytidine 5-monophosphate (CMP) (IspF). In Maricaulis maris (strain MCS10) (Caulobacter maris), this protein is Bifunctional enzyme IspD/IspF.